Here is a 2082-residue protein sequence, read N- to C-terminus: Polyketide synthase ThaQ (2082 aa).

The tract at residues 398–468 is disordered; that stretch reads NDARRAGSAR…DSAHDSAHAA (71 aa). 3 stretches are compositionally biased toward basic and acidic residues: residues 399–411, 419–430, and 439–468; these read DARRAGSARRDAR, HGARHEAAHDAQ, and ADAHDSAHDSAHDSAHDSAHDSAHDSAHAA. The Carrier 1 domain maps to 470–546; it reads ALRREGRAYL…ALLDHLLAAH (77 aa). Position 507 is an O-(pantetheine 4'-phosphoryl)serine (Ser-507). Composition is skewed to low complexity over residues 560–582 and 593–605; these read APARGVGARAQAAQASGEGRAAP and DTPSSAPSSAPAR. A disordered region spans residues 560–655; it reads APARGVGARA…RYAPRAPHPD (96 aa). Over residues 606 to 631 the composition is skewed to pro residues; that stretch reads PDQPAPSGPPAQPAQPAPRADTPPPA. A Ketosynthase family 3 (KS3) domain is found at 658–1077; the sequence is AEPVAIIGIS…GVNAHVVLEE (420 aa). Disordered regions lie at residues 1250–1269 and 1603–1653; these read APGTRHASAGEATEAAEAAE and ARGP…VKSD. 2 stretches are compositionally biased toward low complexity: residues 1256–1269 and 1612–1624; these read ASAGEATEAAEAAE and SPDAQPPAARAQA. The span at 1640–1653 shows a compositional bias: basic and acidic residues; the sequence is ADSKAGPKSEVKSD. The Carrier 2 domain occupies 1669–1743; it reads ASVAASVEDA…ALVRAVAEAV (75 aa). An O-(pantetheine 4'-phosphoryl)serine modification is found at Ser-1703. Residues 1792–2022 enclose the AB hydrolase-1 domain; the sequence is PRVVLIPGLG…GAGHAVFLTH (231 aa). The segment covering 2045 to 2067 has biased composition (low complexity); that stretch reads GAAESVESVEATEAAEAARSPAV. The tract at residues 2045-2082 is disordered; it reads GAAESVESVEATEAAEAARSPAVARRRATDDAPVGSDA.

Pantetheine 4'-phosphate is required as a cofactor.

It is found in the cytoplasm. It participates in antibiotic biosynthesis. In terms of biological role, involved in production of the polyketide antibiotic thailandamide. This is Polyketide synthase ThaQ from Burkholderia thailandensis (strain ATCC 700388 / DSM 13276 / CCUG 48851 / CIP 106301 / E264).